Here is a 266-residue protein sequence, read N- to C-terminus: 4-hydroxy-tetrahydrodipicolinate reductase (266 aa).

10 to 15 serves as a coordination point for NAD(+); it reads GPRGRM. K38 provides a ligand contact to NADP(+). Residues 99 to 101 and 125 to 128 contribute to the NAD(+) site; these read GTT and APNF. The active-site Proton donor/acceptor is the H155. Residue H156 coordinates (S)-2,3,4,5-tetrahydrodipicolinate. The active-site Proton donor is the K159. 165–166 is a (S)-2,3,4,5-tetrahydrodipicolinate binding site; the sequence is GT.

Belongs to the DapB family.

Its subcellular location is the cytoplasm. It catalyses the reaction (S)-2,3,4,5-tetrahydrodipicolinate + NAD(+) + H2O = (2S,4S)-4-hydroxy-2,3,4,5-tetrahydrodipicolinate + NADH + H(+). The enzyme catalyses (S)-2,3,4,5-tetrahydrodipicolinate + NADP(+) + H2O = (2S,4S)-4-hydroxy-2,3,4,5-tetrahydrodipicolinate + NADPH + H(+). It functions in the pathway amino-acid biosynthesis; L-lysine biosynthesis via DAP pathway; (S)-tetrahydrodipicolinate from L-aspartate: step 4/4. Catalyzes the conversion of 4-hydroxy-tetrahydrodipicolinate (HTPA) to tetrahydrodipicolinate. This Bacillus cereus (strain ATCC 14579 / DSM 31 / CCUG 7414 / JCM 2152 / NBRC 15305 / NCIMB 9373 / NCTC 2599 / NRRL B-3711) protein is 4-hydroxy-tetrahydrodipicolinate reductase.